We begin with the raw amino-acid sequence, 378 residues long: Septin-5 (378 aa).

Residues 50–323 (KGFDFTLMVA…ENYRAHCIQQ (274 aa)) form the Septin-type G domain. The interval 60 to 67 (GESGLGKS) is G1 motif. Residues 60–67 (GESGLGKS), Thr-94, and Gly-120 contribute to the GTP site. Positions 117-120 (DTPG) are G3 motif. Arg-177 is subject to Omega-N-methylarginine. The segment at 198–201 (AKAD) is G4 motif. Residue 199 to 207 (KADCLVPSE) coordinates GTP. Ser-234 is subject to Phosphoserine. Residues Gly-257 and Arg-272 each contribute to the GTP site. Ser-336 bears the Phosphoserine mark. Thr-345 carries the phosphothreonine modification. Residues 347-378 (DAETEKLIRMKDEELRRMQEMLQRMKQQMQDQ) adopt a coiled-coil conformation.

The protein belongs to the TRAFAC class TrmE-Era-EngA-EngB-Septin-like GTPase superfamily. Septin GTPase family. In terms of assembly, septins polymerize into heterooligomeric protein complexes that form filaments, and can associate with cellular membranes, actin filaments and microtubules. GTPase activity is required for filament formation. Interacts with SEPTIN2 and SEPTIN5. In platelets, associated with a complex containing STX4. Interacts with PRKN; this interaction leads to SEPTIN5 ubiquitination and degradation. Interacts with DYRK1A. Interacts with STX1A; in the cerebellar cortex. Phosphorylated by DYRK1A.

Its subcellular location is the cytoplasm. The protein resides in the cytoskeleton. Functionally, filament-forming cytoskeletal GTPase. May play a role in cytokinesis (Potential). May play a role in platelet secretion. The chain is Septin-5 from Macaca fascicularis (Crab-eating macaque).